The following is a 1207-amino-acid chain: DNA-directed RNA polymerase subunit beta' (1207 aa).

Cys60, Cys62, Cys75, and Cys78 together coordinate Zn(2+). Residues Asp449, Asp451, and Asp453 each coordinate Mg(2+). Cys822, Cys896, Cys903, and Cys906 together coordinate Zn(2+).

It belongs to the RNA polymerase beta' chain family. In terms of assembly, the RNAP catalytic core consists of 2 alpha, 1 beta, 1 beta' and 1 omega subunit. When a sigma factor is associated with the core the holoenzyme is formed, which can initiate transcription. Mg(2+) serves as cofactor. Requires Zn(2+) as cofactor.

It catalyses the reaction RNA(n) + a ribonucleoside 5'-triphosphate = RNA(n+1) + diphosphate. In terms of biological role, DNA-dependent RNA polymerase catalyzes the transcription of DNA into RNA using the four ribonucleoside triphosphates as substrates. This is DNA-directed RNA polymerase subunit beta' from Staphylococcus aureus (strain MRSA252).